The chain runs to 470 residues: Argininosuccinate lyase (470 aa).

The protein belongs to the lyase 1 family. Argininosuccinate lyase subfamily.

The protein resides in the cytoplasm. The catalysed reaction is 2-(N(omega)-L-arginino)succinate = fumarate + L-arginine. Its pathway is amino-acid biosynthesis; L-arginine biosynthesis; L-arginine from L-ornithine and carbamoyl phosphate: step 3/3. This chain is Argininosuccinate lyase, found in Synechococcus sp. (strain WH7803).